A 75-amino-acid polypeptide reads, in one-letter code: Small ribosomal subunit protein bS18 (75 aa).

Belongs to the bacterial ribosomal protein bS18 family. Part of the 30S ribosomal subunit. Forms a tight heterodimer with protein bS6.

In terms of biological role, binds as a heterodimer with protein bS6 to the central domain of the 16S rRNA, where it helps stabilize the platform of the 30S subunit. This chain is Small ribosomal subunit protein bS18, found in Mycoplasma mycoides subsp. mycoides SC (strain CCUG 32753 / NCTC 10114 / PG1).